A 469-amino-acid chain; its full sequence is Glutamine synthetase (469 aa).

A GS beta-grasp domain is found at 16-100; it reads EGVQYVDLRF…MICDIYDPVT (85 aa). A GS catalytic domain is found at 108–469; that stretch reads TRYIAQKAEQ…PKEFELYWDI (362 aa). The Mg(2+) site is built by Glu133 and Glu135. Residue Glu207 participates in ATP binding. Mg(2+) is bound by residues Glu212 and Glu220. Residues 264–265 and Gly265 contribute to the L-glutamate site; that span reads NG. Mg(2+) is bound at residue His269. ATP is bound by residues 271-273 and Ser273; that span reads HFS. L-glutamate contacts are provided by Arg321, Glu327, and Arg339. 3 residues coordinate ATP: Arg339, Arg344, and Lys353. Residue Glu358 coordinates Mg(2+). Residue Arg360 coordinates L-glutamate. Tyr398 carries the O-AMP-tyrosine modification.

This sequence belongs to the glutamine synthetase family. Oligomer of 12 subunits arranged in the form of two hexagons. Mg(2+) serves as cofactor.

The protein localises to the cytoplasm. It catalyses the reaction L-glutamate + NH4(+) + ATP = L-glutamine + ADP + phosphate + H(+). Its activity is regulated as follows. The activity of this enzyme could be controlled by adenylation under conditions of abundant glutamine. Its function is as follows. Catalyzes the ATP-dependent biosynthesis of glutamine from glutamate and ammonia. In Aquifex aeolicus (strain VF5), this protein is Glutamine synthetase.